Consider the following 937-residue polypeptide: Isoleucine--tRNA ligase (937 aa).

Residues Pro58 to His68 carry the 'HIGH' region motif. Glu561 is an L-isoleucyl-5'-AMP binding site. The 'KMSKS' region motif lies at Lys602–Ser606. Lys605 is a binding site for ATP. 4 residues coordinate Zn(2+): Cys900, Cys903, Cys920, and Cys923.

The protein belongs to the class-I aminoacyl-tRNA synthetase family. IleS type 1 subfamily. As to quaternary structure, monomer. The cofactor is Zn(2+).

The protein resides in the cytoplasm. The catalysed reaction is tRNA(Ile) + L-isoleucine + ATP = L-isoleucyl-tRNA(Ile) + AMP + diphosphate. Functionally, catalyzes the attachment of isoleucine to tRNA(Ile). As IleRS can inadvertently accommodate and process structurally similar amino acids such as valine, to avoid such errors it has two additional distinct tRNA(Ile)-dependent editing activities. One activity is designated as 'pretransfer' editing and involves the hydrolysis of activated Val-AMP. The other activity is designated 'posttransfer' editing and involves deacylation of mischarged Val-tRNA(Ile). The polypeptide is Isoleucine--tRNA ligase (Histophilus somni (strain 2336) (Haemophilus somnus)).